Here is a 368-residue protein sequence, read N- to C-terminus: MSLFGTTSGFGTGGTSMFGSTTTDNHNPMKDIEVTSSPDDSIGCLSFSPPTLPGNFLIAGSWANDVRCWEVQDSGQTIPKAQQMHTGPVLDVCWSDDGSKVFTASCDKTAKMWDLNSNQAIQIAQHDAPVKTIHWIKAPNYSCVMTGSWDKTLKFWDTRSSNPMMVLQLPERCYCADVIYPMAVVATAERGLIVYQLENQPSEFRRIESPLKHQHRCVAIFKDKQNKPTGFALGSIEGRVAIHYINPPNPAKDNFTFKCHRSNGTNTSAPQDIYAVNGIAFHPVHGTLATVGSDGRFSFWDKDARTKLKTSEQLDQPVAACGFNHNGNIFAYASSYDWSKGHEFYNPQKKNYIFLRNAAEELKPRNKK.

Residues 15-34 (TSMFGSTTTDNHNPMKDIEV) are disordered. WD repeat units lie at residues 37–79 (SPDD…QTIP), 84–114 (MHTGPVLDVCWSDDGSKVFTASCDKTAKMWD), 125–157 (QHDAPVKTIHWIKAPNYSCVMTGSWDKTLKFWD), 168–206 (QLPERCYCADVIYPMAVVATAERGLIVYQLENQPSEFRR), 215–255 (HRCV…KDNF), 271–301 (QDIYAVNGIAFHPVHGTLATVGSDGRFSFWD), and 310–346 (TSEQLDQPVAACGFNHNGNIFAYASSYDWSKGHEFYN). Residue threonine 229 is modified to Phosphothreonine.

The protein belongs to the WD repeat rae1 family. As to quaternary structure, interacts with NUMA1 (via N-terminal end of the coiled-coil domain); this interaction promotes spindle formation in mitosis. Interacts with NUP98. Interacts with MYCBP2. Interacts with USP11.

The protein localises to the cytoplasm. It localises to the nucleus. Its subcellular location is the cytoskeleton. The protein resides in the spindle pole. Functionally, plays a role in mitotic bipolar spindle formation. Binds mRNA. May function in nucleocytoplasmic transport and in directly or indirectly attaching cytoplasmic mRNPs to the cytoskeleton. This is mRNA export factor (Rae1) from Rattus norvegicus (Rat).